The chain runs to 84 residues: Hydramacin-1 (84 aa).

The N-terminal stretch at 1-24 (MRTVVFFILVSIFLVALKPTGTQA) is a signal peptide. At Q25 the chain carries Pyrrolidone carboxylic acid. Intrachain disulfides connect C29–C72, C36–C65, C51–C81, and C55–C83.

In terms of tissue distribution, expressed in the endodermal epithelium.

The protein resides in the secreted. It is found in the target cell membrane. Functionally, cationic antimicrobial peptide potently active against Gram-positive and Gram-negative bacteria including multi-resistant human pathogenic strains. Is not active against the Gram-positive Coccus species, Gram-negative non-fermentation species and against the fungus C.albicans. It leads to aggregation of bacteria as an initial step of its bactericidal mechanism. Aggregated cells are connected via electron-dense contacts and adopt a thorn apple-like morphology. Hydramycin contains a belt of positively charged residues that separate two hydrophobic areas. This structure may explain the observed aggregation of bacteria, since each of these areas can immerse into the outer leaflets of the membranes of two individual bacteria. Is able to permeabilize membranes of viable bacteria at low and neutral pH values, but no pore-forming activity is not detected. In Hydra vulgaris (Hydra), this protein is Hydramacin-1.